Here is a 25-residue protein sequence, read N- to C-terminus: Ocellatin-F1 (25 aa).

Leucine 25 is modified (leucine amide).

Belongs to the frog skin active peptide (FSAP) family. Ocellatin subfamily. As to expression, expressed by the skin glands.

It localises to the secreted. Antibacterial peptide that inhibits reference strains of both Gram-negative bacteria (E.coli, P.aeruginosa, E.cloacae, K.pneumoniae, and A.actinomycetemcomitans) and Gram-positive bacteria (S.aureus) with relatively low potencies (MIC=25-400 uM). Shows antifungal activity against C.lusitaniae (MIC=50.25 uM), but no activity against C.albicans. In the presence of an alkaloid (bufotenine), inhibits cellular infection by the rabies virus. The peptide shows very low hemolytic activity against rabbit erythrocytes. The low amphipathicity of alpha-helices demonstrated by wheel projection as well as the low cationicity may explain the low antibacterial and hemolytic potencies. The polypeptide is Ocellatin-F1 (Leptodactylus labyrinthicus (Labyrinth frog)).